The chain runs to 129 residues: UPF0148 protein APE_0207 (129 aa).

This sequence belongs to the UPF0148 family.

This is UPF0148 protein APE_0207 from Aeropyrum pernix (strain ATCC 700893 / DSM 11879 / JCM 9820 / NBRC 100138 / K1).